The chain runs to 313 residues: Ribosomal RNA small subunit methyltransferase H (313 aa).

Residues 35 to 37, D55, F79, D101, and Q108 each bind S-adenosyl-L-methionine; that span reads GGH.

The protein belongs to the methyltransferase superfamily. RsmH family.

It is found in the cytoplasm. It catalyses the reaction cytidine(1402) in 16S rRNA + S-adenosyl-L-methionine = N(4)-methylcytidine(1402) in 16S rRNA + S-adenosyl-L-homocysteine + H(+). Its function is as follows. Specifically methylates the N4 position of cytidine in position 1402 (C1402) of 16S rRNA. In Erwinia tasmaniensis (strain DSM 17950 / CFBP 7177 / CIP 109463 / NCPPB 4357 / Et1/99), this protein is Ribosomal RNA small subunit methyltransferase H.